Reading from the N-terminus, the 481-residue chain is Neuronal acetylcholine receptor subunit eat-2 (481 aa).

The signal sequence occupies residues 1-19 (MFLLLQILYILLFLNLADT). At 20–235 (SDDEYRLLKD…MHLKRRTMYY (216 aa)) the chain is on the extracellular side. Residue N93 is glycosylated (N-linked (GlcNAc...) asparagine). A disulfide bond links C147 and C161. Helical transmembrane passes span 236-256 (GLNW…GFTM), 264-284 (VTLQ…VSEV), and 292-312 (IPII…SICV). The Cytoplasmic segment spans residues 313 to 443 (SLITVNIFYR…WRFMAMVIDR (131 aa)). Positions 356–384 (KPKREKKKEEEEDEESNAGGKEEESELIS) are disordered. The chain crosses the membrane as a helical span at residues 444–464 (ASLFLFTGLIFGTTFVIFAAC).

The protein belongs to the ligand-gated ion channel (TC 1.A.9) family. Acetylcholine receptor (TC 1.A.9.1) subfamily. In terms of assembly, neuronal AChR seems to be composed of two different type of subunits: alpha and beta.

The protein resides in the postsynaptic cell membrane. The protein localises to the cell membrane. In terms of biological role, after binding acetylcholine, the AChR responds by an extensive change in conformation that affects all subunits and leads to opening of an ion-conducting channel across the plasma membrane. Nicotinic acetylcholine receptor in the MC pharyngeal motor neuron involved in pharyngeal pumping. Has a role in the determination of life span possibly via calorific restriction which affects growth rate, although this is independent of metabolic activity. The chain is Neuronal acetylcholine receptor subunit eat-2 from Caenorhabditis briggsae.